Consider the following 310-residue polypeptide: Bifunctional phosphoglucose/phosphomannose isomerase (310 aa).

In terms of domain architecture, SIS spans 22–152 (FDGSFRTGTF…IRPKHEDIEE (131 aa)). Glycine 41, serine 42, serine 80, serine 82, threonine 85, and arginine 128 together coordinate D-fructose 6-phosphate. Catalysis depends on glutamate 202, which acts as the Proton acceptor. Histidine 218 and lysine 306 together coordinate D-fructose 6-phosphate. Histidine 218 serves as the catalytic Proton donor. The active-site Proton acceptor is lysine 306.

This sequence belongs to the PGI/PMI family. As to quaternary structure, homodimer.

It carries out the reaction alpha-D-glucose 6-phosphate = beta-D-fructose 6-phosphate. The catalysed reaction is D-mannose 6-phosphate = D-fructose 6-phosphate. With respect to regulation, inhibited by low concentrations of erythrose 4-phosphate and 6-phosphogluconate. Its function is as follows. Dual specificity isomerase that catalyzes the isomerization of both glucose-6-phosphate and mannose-6-phosphate to fructose-6-phosphate with similar catalytic efficiency. In Thermoplasma acidophilum (strain ATCC 25905 / DSM 1728 / JCM 9062 / NBRC 15155 / AMRC-C165), this protein is Bifunctional phosphoglucose/phosphomannose isomerase.